The chain runs to 113 residues: Ribonuclease P protein component (113 aa).

It belongs to the RnpA family. Consists of a catalytic RNA component (M1 or rnpB) and a protein subunit.

It catalyses the reaction Endonucleolytic cleavage of RNA, removing 5'-extranucleotides from tRNA precursor.. In terms of biological role, RNaseP catalyzes the removal of the 5'-leader sequence from pre-tRNA to produce the mature 5'-terminus. It can also cleave other RNA substrates such as 4.5S RNA. The protein component plays an auxiliary but essential role in vivo by binding to the 5'-leader sequence and broadening the substrate specificity of the ribozyme. In Ureaplasma parvum serovar 3 (strain ATCC 27815 / 27 / NCTC 11736), this protein is Ribonuclease P protein component.